The primary structure comprises 354 residues: MTELKNDRYLRALLRQPVDVTPVWMMRQAGRYLPEYKATRAQAGDFMSLCKNAELACEVTLQPLRRYPLDAAILFSDILTIPDAMGLGLYFEAGEGPRFTAPVTCKGDVDKLPIPDPEDELGYVMNAVRTIRRELKGEVPLIGFSGSPWTLATYMVEGGSSKAFTVIKKMMYADPQALHLLLDKLAKSVTLYLNAQIKAGAQSVMIFDTWGGVLTGRDYQQFSLYYMHKIVDGLLRENDGRRVPVTLFTKGGGQWLEAMAETGCDALGLDWTTDIADARRRVGHKVALQGNMDPSMLYAPPARIEDEVATILAGFGQGEGHVFNLGHGIHQDVPPEHAGAFVEAVHRLSAQYHN.

Substrate is bound by residues 27–31, Asp-77, Tyr-154, Thr-209, and His-327; that span reads RQAGR.

The protein belongs to the uroporphyrinogen decarboxylase family. Homodimer.

It is found in the cytoplasm. The enzyme catalyses uroporphyrinogen III + 4 H(+) = coproporphyrinogen III + 4 CO2. Its pathway is porphyrin-containing compound metabolism; protoporphyrin-IX biosynthesis; coproporphyrinogen-III from 5-aminolevulinate: step 4/4. In terms of biological role, catalyzes the decarboxylation of four acetate groups of uroporphyrinogen-III to yield coproporphyrinogen-III. This chain is Uroporphyrinogen decarboxylase, found in Salmonella heidelberg (strain SL476).